The sequence spans 1259 residues: Protein flightless-1 homolog (1259 aa).

15 LRR repeats span residues 7 to 32 (LPFIRGVDLSGNDFKGGNFPEHVKSM), 33 to 55 (TSLRWLKLNRTGLCYLPEELASL), 56 to 78 (QKLEHLSVSHNSLTTLHGELSSL), 80 to 103 (NLRAVVARANNLKNSGVPDDIFQL), 104 to 126 (DDLSVLDLSHNQLTEIPRDLENS), 128 to 149 (NMLVLNLSHNSIDNIPNQLFIN), 150 to 173 (LTDLLYLDLSDNNLDSLPPQMRRL), 176 to 201 (LQTLILNNNPLMHAQLRQLPVMVSLQ), 222 to 245 (LSNLTDVDLSCNDLTRVPECLYSL), 247 to 268 (NLKRLNLSSNQISELSLCIDQW), 269 to 291 (TKLETLNLSRNQLTSLPSAICKL), 293 to 316 (KLKKLYVNSNKIDFDGLPSGVGKL), 317 to 339 (SNLVEFMAANNNLELVPEGLCRC), 340 to 363 (GKLKKLVLNKNRLVTLPEAIHFLT), and 365 to 385 (LEVLDVRENPNLVMPPKPVDR). 4 Gelsolin-like repeats span residues 509-589 (IPIQ…SEEF), 628-702 (NIRL…PEFW), 757-830 (DVVP…CQVF), and 1170-1225 (EKCS…RSKD).

Expressed in ventricular cardiomyocytes, where it particularly localizes to intercalated disks and costamere-like structures (at protein level).

It is found in the nucleus. The protein resides in the cytoplasm. It localises to the cytoskeleton. Its subcellular location is the microtubule organizing center. The protein localises to the centrosome. It is found in the cell junction. The protein resides in the focal adhesion. In terms of biological role, is a regulator of actin polymerization, required for proper myofibril organization and the assembly of cardiomyocyte cell adhesion complexes. Is a regulator of the length of sarcomeric thin filaments. Regulates cytoskeletal rearrangements involved in cytokinesis and cell migration, by inhibiting Rac1-dependent paxillin phosphorylation. May play a role as coactivator in transcriptional activation by hormone-activated nuclear receptors (NR) and acts in cooperation with NCOA2 and CARM1. Involved in estrogen hormone signaling. This chain is Protein flightless-1 homolog, found in Danio rerio (Zebrafish).